The sequence spans 111 residues: Elevenin (111 aa).

The first 24 residues, 1–24 (MAPSQKALLVLVLSMLLTASDSRA), serve as a signal peptide directing secretion. An intrachain disulfide couples Cys29 to Cys38. Positions 44 to 111 (KRGGDSLSVG…TEQLDRLLTL (68 aa)) are excised as a propeptide.

Belongs to the elevenin family. As to quaternary structure, monomer. Expressed by the venom duct.

Its subcellular location is the secreted. In terms of biological role, may mimic the function of prey elevenin neuropeptide. In vivo, intracranial injection in mice induces hyperactivity. The polypeptide is Elevenin (Conus ebraeus (Hebrew cone)).